The chain runs to 208 residues: Translation initiation factor 2 subunit beta (208 aa).

Positions 144 to 202 (GIEEGKEYTVEISEVGSSGEGRASFRGFTIFVPGTKKGETVKVKIKKIKNDVAIAEVVS) constitute a TRAM domain.

It belongs to the eIF-2-beta/eIF-5 family. In terms of assembly, heterotrimer composed of an alpha, a beta and a gamma chain.

EIF-2 functions in the early steps of protein synthesis by forming a ternary complex with GTP and initiator tRNA. In Thermoplasma volcanium (strain ATCC 51530 / DSM 4299 / JCM 9571 / NBRC 15438 / GSS1), this protein is Translation initiation factor 2 subunit beta (eif2b).